A 342-amino-acid polypeptide reads, in one-letter code: Phosphate acyltransferase (342 aa).

This sequence belongs to the PlsX family. Homodimer. Probably interacts with PlsY.

Its subcellular location is the cytoplasm. It catalyses the reaction a fatty acyl-[ACP] + phosphate = an acyl phosphate + holo-[ACP]. It participates in lipid metabolism; phospholipid metabolism. Catalyzes the reversible formation of acyl-phosphate (acyl-PO(4)) from acyl-[acyl-carrier-protein] (acyl-ACP). This enzyme utilizes acyl-ACP as fatty acyl donor, but not acyl-CoA. In Shewanella halifaxensis (strain HAW-EB4), this protein is Phosphate acyltransferase.